The sequence spans 307 residues: Porphobilinogen deaminase (307 aa).

At Cys-241 the chain carries S-(dipyrrolylmethanemethyl)cysteine.

Belongs to the HMBS family. As to quaternary structure, monomer. Requires dipyrromethane as cofactor.

The enzyme catalyses 4 porphobilinogen + H2O = hydroxymethylbilane + 4 NH4(+). It participates in porphyrin-containing compound metabolism; protoporphyrin-IX biosynthesis; coproporphyrinogen-III from 5-aminolevulinate: step 2/4. In terms of biological role, tetrapolymerization of the monopyrrole PBG into the hydroxymethylbilane pre-uroporphyrinogen in several discrete steps. The sequence is that of Porphobilinogen deaminase from Macrococcus caseolyticus (strain JCSC5402) (Macrococcoides caseolyticum).